Consider the following 202-residue polypeptide: Urease accessory protein UreG (202 aa).

11–18 (GPVGSGKT) contacts GTP.

Belongs to the SIMIBI class G3E GTPase family. UreG subfamily. As to quaternary structure, homodimer. UreD, UreF and UreG form a complex that acts as a GTP-hydrolysis-dependent molecular chaperone, activating the urease apoprotein by helping to assemble the nickel containing metallocenter of UreC. The UreE protein probably delivers the nickel.

Its subcellular location is the cytoplasm. Functionally, facilitates the functional incorporation of the urease nickel metallocenter. This process requires GTP hydrolysis, probably effectuated by UreG. In Magnetococcus marinus (strain ATCC BAA-1437 / JCM 17883 / MC-1), this protein is Urease accessory protein UreG.